Reading from the N-terminus, the 348-residue chain is Phosphoribosylformylglycinamidine cyclo-ligase (348 aa).

Belongs to the AIR synthase family.

It is found in the cytoplasm. It carries out the reaction 2-formamido-N(1)-(5-O-phospho-beta-D-ribosyl)acetamidine + ATP = 5-amino-1-(5-phospho-beta-D-ribosyl)imidazole + ADP + phosphate + H(+). It participates in purine metabolism; IMP biosynthesis via de novo pathway; 5-amino-1-(5-phospho-D-ribosyl)imidazole from N(2)-formyl-N(1)-(5-phospho-D-ribosyl)glycinamide: step 2/2. The sequence is that of Phosphoribosylformylglycinamidine cyclo-ligase from Aromatoleum aromaticum (strain DSM 19018 / LMG 30748 / EbN1) (Azoarcus sp. (strain EbN1)).